We begin with the raw amino-acid sequence, 238 residues long: Peroxisomal biogenesis factor 11 (238 aa).

Belongs to the peroxin-11 family.

The protein resides in the mitochondrion. Its subcellular location is the peroxisome membrane. Involved in peroxisomal proliferation. Promotes peroxisome division and biogenesis. This is Peroxisomal biogenesis factor 11 (pex11) from Schizosaccharomyces pombe (strain 972 / ATCC 24843) (Fission yeast).